A 285-amino-acid chain; its full sequence is ATP phosphoribosyltransferase (285 aa).

Belongs to the ATP phosphoribosyltransferase family. Long subfamily. Requires Mg(2+) as cofactor.

The protein resides in the cytoplasm. The catalysed reaction is 1-(5-phospho-beta-D-ribosyl)-ATP + diphosphate = 5-phospho-alpha-D-ribose 1-diphosphate + ATP. It participates in amino-acid biosynthesis; L-histidine biosynthesis; L-histidine from 5-phospho-alpha-D-ribose 1-diphosphate: step 1/9. Its activity is regulated as follows. Feedback inhibited by histidine. Its function is as follows. Catalyzes the condensation of ATP and 5-phosphoribose 1-diphosphate to form N'-(5'-phosphoribosyl)-ATP (PR-ATP). Has a crucial role in the pathway because the rate of histidine biosynthesis seems to be controlled primarily by regulation of HisG enzymatic activity. This is ATP phosphoribosyltransferase from Streptomyces avermitilis (strain ATCC 31267 / DSM 46492 / JCM 5070 / NBRC 14893 / NCIMB 12804 / NRRL 8165 / MA-4680).